A 432-amino-acid polypeptide reads, in one-letter code: D-amino acid dehydrogenase (432 aa).

Residue 3–17 coordinates FAD; that stretch reads VVILGSGVVGVASAW.

The protein belongs to the DadA oxidoreductase family. It depends on FAD as a cofactor.

It catalyses the reaction a D-alpha-amino acid + A + H2O = a 2-oxocarboxylate + AH2 + NH4(+). The protein operates within amino-acid degradation; D-alanine degradation; NH(3) and pyruvate from D-alanine: step 1/1. Functionally, oxidative deamination of D-amino acids. This is D-amino acid dehydrogenase from Shigella boydii serotype 4 (strain Sb227).